We begin with the raw amino-acid sequence, 590 residues long: Regulatory solute carrier protein family 1 member 1 (590 aa).

4 disordered regions span residues 1–116, 144–234, 277–331, and 359–466; these read MSSS…TQGL, EEGW…PDSE, SPSS…AEES, and EEVT…SHRT. Residues 16–35 show a composition bias toward polar residues; that stretch reads SSGQSPEAGNPTSLARSVSA. The span at 78 to 91 shows a compositional bias: low complexity; the sequence is SPCAAAAAPSSAMP. Positions 150 to 161 are enriched in polar residues; the sequence is ENQNPSQVNDLQ. Composition is skewed to basic and acidic residues over residues 162 to 179 and 188 to 203; these read QHQEPENARHEAGPRDAP and PGERQQKHEVADREAT. The segment covering 313–331 has biased composition (low complexity); it reads SSSSVCGSSQPPAESAEES. Positions 362–376 are enriched in polar residues; sequence TCQSEGTAWGQTRVN. Basic and acidic residues-rich tracts occupy residues 380–395 and 404–420; these read RWTESERRTQDEDRPQ and VKTEKLTDASPDTRIED. Positions 451 to 465 are enriched in polar residues; the sequence is SVTVTSAETSNQSHR. In terms of domain architecture, UBA spans 544-584; the sequence is GFPAADIDRILRAGFTLQEALGALHRVGGNADLALLVLLAK.

As to quaternary structure, interacts with YRDC. Highly expressed in renal outer medulla, renal inner medulla, duodenum, ileum and jejunum. Moderately expressed in renal outer cortex, renal papilla, brain and liver.

The protein resides in the cell membrane. The protein localises to the nucleus. It is found in the golgi apparatus. It localises to the trans-Golgi network. Mediates transcriptional and post-transcriptional regulation of SLC5A1. Inhibits a dynamin and PKC-dependent exocytotic pathway of SLC5A1. Also involved in transcriptional regulation of SLC22A2. Exhibits glucose-dependent, short-term inhibition of SLC5A1 and SLC22A2 by inhibiting the release of vesicles from the trans-Golgi network. The polypeptide is Regulatory solute carrier protein family 1 member 1 (RSC1A1) (Oryctolagus cuniculus (Rabbit)).